We begin with the raw amino-acid sequence, 440 residues long: Putative F-box/LRR-repeat protein At5g15620 (440 aa).

Residues 1-52 (MDRFSNLPDDVIYHIVSFLSAKEATCLKFVSKNFQNLVTIKRNVVFHHWESF) enclose the F-box domain. LRR repeat units lie at residues 4 to 31 (FSNL…KFVS), 126 to 153 (LKLG…ILDS), 156 to 181 (FYAS…VIDR), 194 to 205 (SSPTLKRLTLRR), 210 to 235 (PEPE…KYKD), 264 to 289 (YWLN…SIKV), and 318 to 343 (EADF…TIEG).

The sequence is that of Putative F-box/LRR-repeat protein At5g15620 from Arabidopsis thaliana (Mouse-ear cress).